The chain runs to 1019 residues: Probable LRR receptor-like serine/threonine-protein kinase At1g29720 (1019 aa).

Residues 1-19 form the signal peptide; that stretch reads MSIILWSFFLFFTIILSSL. Over 20-615 the chain is Extracellular; that stretch reads TNITTLASFS…EKTKHHIKYP (596 aa). Residues Asn-21, Asn-79, and Asn-90 are each glycosylated (N-linked (GlcNAc...) asparagine). LRR repeat units follow at residues 93-117, 118-141, 143-165, 166-189, 190-212, 214-236, 237-261, 263-283, 284-307, 308-330, 332-351, 352-374, and 375-398; these read ICRITELALKTMSLRGKLPPELTKL, PYLKSIELCRNYLSGTIPMEWAKM, YLTSISVCANNLSGNLPAGLQNF, KNLTFLGVEGNQFSGPIPDELGNL, TSLTGLELASNKFTGILPGTLAR, VNLERVRICDNNFTGIIPAYIGN, WTRLQKLHLYASGLTGPIPDAVVRL, NLLELSLSDTTGIKSFPNLSS, KGLKRLILRNVGLSGPIPSYIWNL, TDLKILDLSFNKLNGIVQGVQNP, KNIYLTGNLLSGNIESGGLL, NSQSYIDLSYNNFSWSSSCQKGS, and TINTYQSSYSKNNLTGLPPCAVPA. 3 N-linked (GlcNAc...) asparagine glycosylation sites follow: Asn-153, Asn-167, and Asn-188. Asn-225 and Asn-236 each carry an N-linked (GlcNAc...) asparagine glycan. Asn-280 and Asn-306 each carry an N-linked (GlcNAc...) asparagine glycan. 4 N-linked (GlcNAc...) asparagine glycosylation sites follow: Asn-363, Asn-387, Asn-469, and Asn-558. The chain crosses the membrane as a helical span at residues 616 to 636; the sequence is LILGASGALVTIVLLAVGIYA. At 637–1019 the chain is on the cytoplasmic side; the sequence is RGIYRRDNNR…STVENSSSSL (383 aa). A Protein kinase domain is found at 673–946; sequence FDQANKLGEG…EAVKMLEGEI (274 aa). ATP is bound by residues 679–687 and Lys-701; that span reads LGEGGFGSV. Tyr-746 is modified (phosphotyrosine). Residue Asp-797 is the Proton acceptor of the active site. Ser-830 is modified (phosphoserine). Phosphothreonine occurs at positions 831 and 836. Tyr-844 bears the Phosphotyrosine mark.

Belongs to the protein kinase superfamily. Ser/Thr protein kinase family.

It localises to the cell membrane. It catalyses the reaction L-seryl-[protein] + ATP = O-phospho-L-seryl-[protein] + ADP + H(+). It carries out the reaction L-threonyl-[protein] + ATP = O-phospho-L-threonyl-[protein] + ADP + H(+). In Arabidopsis thaliana (Mouse-ear cress), this protein is Probable LRR receptor-like serine/threonine-protein kinase At1g29720 (RFK1).